A 125-amino-acid chain; its full sequence is 14 kDa phosphohistidine phosphatase (125 aa).

Ala2 carries the post-translational modification N-acetylalanine. Lys21 is a substrate binding site. His53 serves as the catalytic Proton acceptor. 94–96 (SMG) lines the substrate pocket.

As to quaternary structure, monomer.

The protein localises to the cytoplasm. The catalysed reaction is N(pros)-phospho-L-histidyl-[protein] + H2O = L-histidyl-[protein] + phosphate. It carries out the reaction N(tele)-phospho-L-histidyl-[protein] + H2O = L-histidyl-[protein] + phosphate. Its function is as follows. Exhibits phosphohistidine phosphatase activity. May have a significant involvement in neuronal signaling. This Oryctolagus cuniculus (Rabbit) protein is 14 kDa phosphohistidine phosphatase (PHPT1).